A 121-amino-acid chain; its full sequence is Large ribosomal subunit protein bL20 (121 aa).

This sequence belongs to the bacterial ribosomal protein bL20 family.

Functionally, binds directly to 23S ribosomal RNA and is necessary for the in vitro assembly process of the 50S ribosomal subunit. It is not involved in the protein synthesizing functions of that subunit. The protein is Large ribosomal subunit protein bL20 of Sphingopyxis alaskensis (strain DSM 13593 / LMG 18877 / RB2256) (Sphingomonas alaskensis).